The chain runs to 637 residues: DNA gyrase subunit B (637 aa).

Positions 420-534 (CEIYIVEGDS…EGHVFIAQPP (115 aa)) constitute a Toprim domain. Mg(2+) is bound by residues Glu-426, Asp-499, and Asp-501.

The protein belongs to the type II topoisomerase GyrB family. As to quaternary structure, heterotetramer, composed of two GyrA and two GyrB chains. In the heterotetramer, GyrA contains the active site tyrosine that forms a transient covalent intermediate with DNA, while GyrB binds cofactors and catalyzes ATP hydrolysis. It depends on Mg(2+) as a cofactor. Mn(2+) serves as cofactor. The cofactor is Ca(2+).

The protein localises to the cytoplasm. The catalysed reaction is ATP-dependent breakage, passage and rejoining of double-stranded DNA.. Functionally, a type II topoisomerase that negatively supercoils closed circular double-stranded (ds) DNA in an ATP-dependent manner to modulate DNA topology and maintain chromosomes in an underwound state. Negative supercoiling favors strand separation, and DNA replication, transcription, recombination and repair, all of which involve strand separation. Also able to catalyze the interconversion of other topological isomers of dsDNA rings, including catenanes and knotted rings. Type II topoisomerases break and join 2 DNA strands simultaneously in an ATP-dependent manner. The chain is DNA gyrase subunit B from Clostridium acetobutylicum (strain ATCC 824 / DSM 792 / JCM 1419 / IAM 19013 / LMG 5710 / NBRC 13948 / NRRL B-527 / VKM B-1787 / 2291 / W).